Consider the following 534-residue polypeptide: Acyl-CoA-binding domain-containing protein 5 (534 aa).

The ACB domain occupies 41-130; it reads HETRFEAAVK…MKKIIETMPM (90 aa). An acyl-CoA is bound at residue 52-61; that stretch reads IQSLPKNGSF. P63 carries the phosphothreonine modification. An acyl-CoA is bound by residues 72–76, K98, and Y117; that span reads YSFYK. 2 positions are modified to phosphothreonine: L137 and E172. The segment at 181-225 is disordered; the sequence is TPNAKTVNGKAESSDSGAESEEEEAQEEVKGAEQSDNDKKMMKKS. The stretch at 190-219 forms a coiled coil; the sequence is KAESSDSGAESEEEEAQEEVKGAEQSDNDK. 7 positions are modified to phosphoserine: S193, S194, S196, S200, S215, S279, and S313. The span at 207–225 shows a compositional bias: basic and acidic residues; sequence EEVKGAEQSDNDKKMMKKS. Over residues 376-385 the composition is skewed to basic and acidic residues; the sequence is EVKHGGEDGR. A disordered region spans residues 376–442; sequence EVKHGGEDGR…ERWGSDRGSR (67 aa). T400 carries the post-translational modification Phosphothreonine. S428 bears the Phosphoserine mark. Residues 431-441 are compositionally biased toward basic and acidic residues; sequence DGERWGSDRGS. Residues 447-476 are a coiled coil; the sequence is EQIALVLMRLQEDMQNVLQRLQKLETLTAL. The residue at position 469 (K469) is an N6-acetyllysine. The chain crosses the membrane as a helical span at residues 506–526; sequence GVLTFAIIWPFIAQWLVYLYY.

This sequence belongs to the ATG37 family.

It localises to the peroxisome membrane. In terms of biological role, acyl-CoA binding protein which acts as the peroxisome receptor for pexophagy but is dispensable for aggrephagy and nonselective autophagy. Binds medium- and long-chain acyl-CoA esters. The sequence is that of Acyl-CoA-binding domain-containing protein 5 (ACBD5) from Homo sapiens (Human).